A 287-amino-acid chain; its full sequence is Histone H1 (287 aa).

Over residues 1–11 the composition is skewed to low complexity; sequence MATEEPVIVNE. Disordered regions lie at residues 1–58 and 120–287; these read MATE…THPP and YKLP…RGRK. Residues 33–51 are compositionally biased toward basic residues; that stretch reads GKAKKETKAKKPAAPRKRS. The H15 domain occupies 55-124; the sequence is THPPYFEMIK…KVKNSYKLPS (70 aa). The segment covering 135–202 has biased composition (basic residues); it reads AKKKPAAAKS…KAKPVAKAKP (68 aa). A compositionally biased stretch (low complexity) spans 203–248; that stretch reads KAAAAAKPKAAVKPKAAPAKTKAAVKPNLKAKTTTAKVAKTATRTT. The span at 276–287 shows a compositional bias: basic residues; it reads PAKKATPKRGRK.

This sequence belongs to the histone H1/H5 family.

It is found in the nucleus. It localises to the chromosome. In terms of biological role, histones H1 are necessary for the condensation of nucleosome chains into higher-order structures. This Solanum lycopersicum (Tomato) protein is Histone H1.